Here is a 143-residue protein sequence, read N- to C-terminus: Endoribonuclease YbeY (143 aa).

Zn(2+) contacts are provided by H109, H113, and H119.

This sequence belongs to the endoribonuclease YbeY family. It depends on Zn(2+) as a cofactor.

Its subcellular location is the cytoplasm. Functionally, single strand-specific metallo-endoribonuclease involved in late-stage 70S ribosome quality control and in maturation of the 3' terminus of the 16S rRNA. This chain is Endoribonuclease YbeY, found in Neorickettsia sennetsu (strain ATCC VR-367 / Miyayama) (Ehrlichia sennetsu).